Consider the following 296-residue polypeptide: MKKALGILAILLILVGGYFAYDKYMDNKAKEQVEYFLDKTLRKSGKGSYKYVDYKPIGGEIIIKDVYYRDRNGEEFKIEEIIIEKLSETEGKFLFKNVKPLKVKGKGLLEEYGYKDPKFNLFVSYEAKPKEKEFHLRSLSLDYPEAFEVNISFILGNYDHAFWKTVALSDRPPEEVSFQVLSELGSIKINSLEVVYRDKGFKERVIKKEAQKRGKTPEEFKKELIRKIEEEKLKARSEFERNLLDAFEKFLEKGKEIKVVIKPNPPLKIQDLFVVAAVQKDERELLKLLNPVIEVK.

The signal sequence occupies residues 1-20; it reads MKKALGILAILLILVGGYFA.

This is an uncharacterized protein from Aquifex aeolicus (strain VF5).